The sequence spans 744 residues: MGWNQTFLFLAFAATAASSLVGSGTSLQLNGIDYFVSPFSQGKVTNGSVAINTRQNQLGFVPATVIAGDLYTESTLQSLFLNWSTVDDVWQPAFLETIFVFNFAKLTNKNHNYHDGVSSSVFPLQVTHKIPSGPYFLNVHTGEVHPAYRLYDDFAGAFTQSLLQRPDGRFQTLSAQVPAAASITIGVPSRLYFTKTEAKPLAGVRIGVKDIFSLAGVKKGCGNRAWYHLYPVANSTGTAMQNLIDKGAIIVGVQKTSQFANGETPTADWVDYHSPFNPRGDGYQDPATSSAGAGSSIASYEWLDLAVGSDTGGSIRGPATVQGIFGNRPSHGLVSLDNVMPLSPKLDTPGFLARDPCLWNAANAALYRDKYTFFGHQAPRYPKKLYLLDFPAGNTSHAPILQNFVTKLAKFLDTSPTNIDLNKEWERTRPTSAGDQSLAQLLNTTYAAIISKDQAKLVREPFYRDYAAVHDGRLPFVNPVPLARWTWGDSQPSSLLSDAVRNKTLFMDWFNGNILPPSSDPLTCSSGLLLHVNGSADFVSRNRYINPPVPPFGFSNSQISLFAETPDSVFPLGQVPVFSSITNNTEYLPVTIDVVAAKGFQLQRDWARLRAILAPALYVDYTKIGKEKWDAMSADDFMAMVSNDDFLGDPCVKTQHLIGATYWERVSESKVIGHHQLRAAHQVYTSPDLKTVKLRGHSHATNEHYYVKSNGVWKFAGLKPEVRWNEYKFEEVFKGSYTQSEKHS.

Tyr-621 lines the substrate pocket. Residues His-656 and His-681 contribute to the active site. Asn-702 contributes to the substrate binding site.

It belongs to the scytalone dehydratase family. Homotrimer. Each subunit contains an active site, located in the central part of the hydrophobic core of the monomer, which functions independently.

Functionally, scytalone dehydratase-like protein; part of the Pks2 gene cluster that mediates the formation of infectious structures (appressoria), enabling these fungi to kill insects faster. The product of the Pks2 gene cluster is different from the one of Pks1 and has still not been identified. This chain is Scytalone dehydratase-like protein Arp1, found in Metarhizium brunneum (strain ARSEF 3297).